The sequence spans 124 residues: Probable 5-hydroxyisourate hydrolase (124 aa).

Substrate is bound by residues His16, Arg57, and Tyr121.

It belongs to the transthyretin family. 5-hydroxyisourate hydrolase subfamily. In terms of assembly, homotetramer.

The catalysed reaction is 5-hydroxyisourate + H2O = 5-hydroxy-2-oxo-4-ureido-2,5-dihydro-1H-imidazole-5-carboxylate + H(+). Its function is as follows. Catalyzes the hydrolysis of 5-hydroxyisourate (HIU) to 2-oxo-4-hydroxy-4-carboxy-5-ureidoimidazoline (OHCU). This is Probable 5-hydroxyisourate hydrolase from Schizosaccharomyces pombe (strain 972 / ATCC 24843) (Fission yeast).